Reading from the N-terminus, the 115-residue chain is Meromycolate extension acyl carrier protein (115 aa).

A Carrier domain is found at 3-81 (VTQEEIIAGI…DVVAYIQKLE (79 aa)). S41 bears the O-(pantetheine 4'-phosphoryl)serine mark.

Belongs to the acyl carrier protein (ACP) family. In terms of processing, 4'-phosphopantetheine is transferred from CoA to a specific serine of apo-AcpM.

The protein localises to the cytoplasm. Its function is as follows. Acyl carrier protein involved in meromycolate extension. In Mycobacterium bovis (strain ATCC BAA-935 / AF2122/97), this protein is Meromycolate extension acyl carrier protein (acpM).